The sequence spans 193 residues: Bcl-2-like protein 2 (193 aa).

Ala-2 is subject to N-acetylalanine. A BH4 motif is present at residues 9-29; sequence DTRALVADFVGYKLRQKGYVC. Residues 85–104 carry the BH1 motif; that stretch reads ELFQGGPNWGRLVAFFVFGA. The short motif at 136-151 is the BH2 element; the sequence is DWIHSSGGWAEFTALY.

This sequence belongs to the Bcl-2 family. Interacts with HIF3A (via C-terminus domain). Interacts with BOP.

The protein localises to the mitochondrion membrane. Functionally, promotes cell survival. Blocks dexamethasone-induced apoptosis. Mediates survival of postmitotic Sertoli cells by suppressing death-promoting activity of BAX. This Bos taurus (Bovine) protein is Bcl-2-like protein 2 (BCL2L2).